The chain runs to 317 residues: L-lactate dehydrogenase (317 aa).

NAD(+) is bound by residues valine 17, aspartate 38, lysine 43, and 82-83; that span reads GA. Substrate is bound by residues glutamine 85, arginine 91, and 123–126; that span reads NPVD. Residues 121 to 123 and serine 146 each bind NAD(+); that span reads VAN. 151–154 serves as a coordination point for substrate; that stretch reads DSAR. Residues arginine 156 and histidine 171 each contribute to the beta-D-fructose 1,6-bisphosphate site. Histidine 178 acts as the Proton acceptor in catalysis. Phosphotyrosine is present on tyrosine 224. Residue threonine 233 participates in substrate binding.

Belongs to the LDH/MDH superfamily. LDH family. Homotetramer.

It is found in the cytoplasm. The catalysed reaction is (S)-lactate + NAD(+) = pyruvate + NADH + H(+). It participates in fermentation; pyruvate fermentation to lactate; (S)-lactate from pyruvate: step 1/1. Its activity is regulated as follows. Allosterically activated by fructose 1,6-bisphosphate (FBP). Its function is as follows. Catalyzes the conversion of lactate to pyruvate. The protein is L-lactate dehydrogenase of Moorella thermoacetica (strain ATCC 39073 / JCM 9320).